We begin with the raw amino-acid sequence, 751 residues long: Photosystem I P700 chlorophyll a apoprotein A1 (751 aa).

A run of 8 helical transmembrane segments spans residues 73–96, 159–182, 198–222, 294–312, 349–372, 388–414, 436–458, and 533–551; these read VFSA…FHGA, LYTT…FHYH, LNHH…HVSL, TAHH…GHMY, WHAQ…HHMY, LSLF…IFMV, AIIS…LYIH, and FMVH…LILL. [4Fe-4S] cluster-binding residues include Cys575 and Cys584. 2 helical membrane-spanning segments follow: residues 591–612 and 665–687; these read HVFL…HFSW and LSAY…LDIF. His676 provides a ligand contact to chlorophyll a'. Chlorophyll a-binding residues include Met683 and Tyr692. Trp693 provides a ligand contact to phylloquinone. A helical membrane pass occupies residues 725–745; sequence AVGVAHYLLGGIATTWSFFLA.

It belongs to the PsaA/PsaB family. As to quaternary structure, the PsaA/B heterodimer binds the P700 chlorophyll special pair and subsequent electron acceptors. PSI consists of a core antenna complex that captures photons, and an electron transfer chain that converts photonic excitation into a charge separation. The eukaryotic PSI reaction center is composed of at least 11 subunits. The cofactor is P700 is a chlorophyll a/chlorophyll a' dimer, A0 is one or more chlorophyll a, A1 is one or both phylloquinones and FX is a shared 4Fe-4S iron-sulfur center..

Its subcellular location is the plastid. It is found in the chloroplast thylakoid membrane. It carries out the reaction reduced [plastocyanin] + hnu + oxidized [2Fe-2S]-[ferredoxin] = oxidized [plastocyanin] + reduced [2Fe-2S]-[ferredoxin]. In terms of biological role, psaA and PsaB bind P700, the primary electron donor of photosystem I (PSI), as well as the electron acceptors A0, A1 and FX. PSI is a plastocyanin/cytochrome c6-ferredoxin oxidoreductase, converting photonic excitation into a charge separation, which transfers an electron from the donor P700 chlorophyll pair to the spectroscopically characterized acceptors A0, A1, FX, FA and FB in turn. Oxidized P700 is reduced on the lumenal side of the thylakoid membrane by plastocyanin or cytochrome c6. This chain is Photosystem I P700 chlorophyll a apoprotein A1, found in Stigeoclonium helveticum (Green alga).